A 95-amino-acid chain; its full sequence is Glutamyl-tRNA(Gln) amidotransferase subunit C (95 aa).

The protein belongs to the GatC family. As to quaternary structure, heterotrimer of A, B and C subunits.

The catalysed reaction is L-glutamyl-tRNA(Gln) + L-glutamine + ATP + H2O = L-glutaminyl-tRNA(Gln) + L-glutamate + ADP + phosphate + H(+). The enzyme catalyses L-aspartyl-tRNA(Asn) + L-glutamine + ATP + H2O = L-asparaginyl-tRNA(Asn) + L-glutamate + ADP + phosphate + 2 H(+). Its function is as follows. Allows the formation of correctly charged Asn-tRNA(Asn) or Gln-tRNA(Gln) through the transamidation of misacylated Asp-tRNA(Asn) or Glu-tRNA(Gln) in organisms which lack either or both of asparaginyl-tRNA or glutaminyl-tRNA synthetases. The reaction takes place in the presence of glutamine and ATP through an activated phospho-Asp-tRNA(Asn) or phospho-Glu-tRNA(Gln). This chain is Glutamyl-tRNA(Gln) amidotransferase subunit C, found in Moraxella catarrhalis (Branhamella catarrhalis).